Here is an 8384-residue protein sequence, read N- to C-terminus: MKLILWYLVVALWCFFKDVEALLYRQKSDGKIAASRSGGFSYGSSSSGDLDRKKPLFSLEFGSPGETEDKSRQRQDAGSPKSEDTPAGGFFNSSSSSGDSDRTKPFFSLGLGAPGKAEDKSGDSQDAGGSKSEDTPPGGFFYGSSSSGDSDKKKPLFSFEFGATGEDEDKSRERWDAGNSRSEDSPADSTNTRYGAGFSSSGASLDVGFGWGISDEKGLEVSKADGRETRGSGSAGGETIVFGPDAGSSVGTGSSGLKLGAGKGDAAFGFEVSDSNSFGDTGISSKTVEGNQTSSSGGSVSIDLGDTSFRSENQFVGGGSLNSISNLWDSGQEGFGINEIGGNGMSGSVSAEAGFKGFGSDSSSSGDSSARNGFENSSGISEDSGVILGSSDQHEVELSRTGGNRKRSSDPDEAGNLSPGSDVSDSGGNTWSSDSGSGGGGVTSSSEYSTSGPLNTPEKGSHIPEATPKYSETNAIIGEISTWSKGAYKSFNGRIFFFESSCPYTFCRHCIESGGDFNIEIKRNNDSEIEKITVLIDNNDVSIFGDTILVNGESVQIPYNNKLIHIKKYGEHNVLNSRRGILTLMWDKNNKLSLTLHKQYPTCGLCGNFNSTPGQDINEHIANSKIPGDCPNAVGKSYEVCEDGIQHCNKIIGTYFEKCGKVAALSNDYKMICIDEYCQTRDKTSTCDTYSELSRLCASDGPGTFESWRSDSDVVCGTQRCPEQHIYKECGPSNPATCSNVAPFQDSECVSGCTCPEGYLLDDIGEKGKCVLKAECPCESSGTVYQPGEVREGPCGSQCTCQDAKWSCTEALCPGRCKVEGSSLTTFDGVKYNFPGNCHFLAVHNEDWSISVELRPCPSGQTGTCLNSVTLLLNSSVPVDKYVFNSDGTVTNDKIRNQGYYYSDKIQIFNASSSYLQVETYFHVKLQIQIVPVMQLYVSMPPNQFTDTVGLCGSYNNKAEDDFMSSQNILEKTSQAFANSWEMMSCPKGNPSSCISIEKEKFAERHCGILLDSSGPLASCHPIVNPKPYHEECKKYTCTCENSQDCLCTILGNYVKACAEKETYIVGWRTGLCEHSCPSGLVFKYNVKACNSSCRSLSERDRSCDVEDVPVDGCTCPDAMYQNNEGNCVLKSQCDCYINDEVMQPGKLIHIDDNKCVCRDGILLCQIPIDLTLQNCSGGAEYVDCSDPKAQRRTNRTCSTRNIPVFDENLPCKRGCFCPEGMVRNSKGICVFPNDCPCSFGGREYDEGSVTSVGCNECTCIKGSWSCTQNECQTICHIYGEGHVRTFDGKSYSFDGLCQYSFLEDYCGHENGTFRILTESVPCCEDGLTCSRKIIVAFQDQNIVLQDGKVTAVKSTESKKCELNANAYSIHTVGLYLILKFQNGIIVIWDKNTRLSVILDPNWNGKVCGLCGNNNGDLKDDFTTRYSSVASGALEFGNSWKTSQECSDTVAQTFPCDSNPYCKAWAVRKCEILRDSTFRDCHNKVDPSAYHDACIEEACACDMEGKYLGFCTAVAMYAEACSAVGVCVSWRKPNLCPVYCDYYNAPGECRWHYEPCGTVTAKTCKDQLVGQKFSSLLEGCYAKCPDSAPYLDENTMKCVSLSECSCFYNDVIPAGGVIEDNCGRTCYCIAGQLECSETAPTNSTFAVSTTTATTILSTGAAITLVTGGPSTAASIPAITTSSSETTGTTLGPLTEPFTTGITETSVPIISTSGNAGMTGVVSPTVTGASGMAGTTGGVDAATTGAASENTSERAGTPRVSGETPAVGGGSTPGEAGPGATVSGSTGVSAGSITASPGASATSSESSKSGTTGPSVGGKTGATSSEATSSEGMSGVTGQSLGSTAGSDSEITAKTSFTGSSPPGKLTRPSPGSPGHFSGGTTEWGNVATTGAAGENTSGALGSTEGSVEATTSAGSGNTAGTSGTGDTGPGNTAVSGTPVVSPGATPGAPGSSTPGEADIGNTSFGKSGTPTVSAASTTSSPVSKHTDAASATAVTISGSKPGTPGTPGGATSGGKITSGWSSSGTSTGASNTPGATGSSTGQTDTSGPSAKVTGNYGQSSEIPGTIKSSSDVSGTMGQSDTTSGPSVAVTRTSEQSSGVTVASEPSVGVSGTTGPLAEISGTTRPLVSGLRTTGSSAEGSGTTGPSSRESVTTRPLAEGSGTSGQSVTGSRATGLSATELGTTVSFTGGLGTSRSSARETRTTGPSADGSGTTGPSVVRSGTTRLSVGVTRATESSPGVTGTTTPSAEESRTTGPSVLVTGTTGQSGQGSGTTGKSFIESGPSVVGSGTTGPTSAGLGTTAPSTRRSSTTKPSVGRTGTTGQSGAESGTTEPSARVAGVTGTSAEVSGRIEPSATESSTSRPLGETTGTTIPSMEGSEATGPSVIGSETTRLSVIGSGTTGTSSGGSGATRSSGGGMGTTGQSTARSETTGPLFGLTGTFGQSATVTGTSSNSAGVTTPEKSPGVAMTTGLLVEGSATTQPRILESETTESSAGVIVTSGQSARVTGATGPSAGETGTTEPSTEGSVAAVLFVIGSETTRPLDIGSGTTGTLSGGSSTTRSSDGTTGTTRKSTARSETTGLSGLTGTSGQLAGVTGTSSKSAGVTVTSEKSAGVAVITGSFVERPVTTGPPLLESETTRPSGGVTVTSGQSARVTETVGASAGVTGTTGPSTEGSGATGPSVVGSGTTRPLAGESGTTESSAGVTGTRPSSSRESATTGPSDEGSGTTGLSAGVTVTSGQSVRKTGTTGAPAGVTETTRPSVVKSGTTGPSVIGTRTTGTSSGGSGATRSSGGETETTGQSAVKSGTTESFTRLTRTSGQSAGMTGTSAQSAGVALTSPFVEGLVTTGSSTVGLETTRPSAVGSGKTGPPVVKAQTTGPSAGVTVTSGQSARMTGASGPSVGVTGTTGPASKGLGTIRPSVVGLETTELSAEGSGTTGPPIVGETTVPSAGVTVTSGYSDRVTGATEPLAGVTGTIKPSVAGSVTTGPSVTGVETTAKTTSGGLSTTISSVGGTGTTGQSPERSGTTGPFTGLTGTSAQSAGVTMTSIQSAGVLVTTGLNVDGLGTTGKALIGSGTTGLSAEATGTIGPSTEGLEKTGPSITGSGTTRPLVTESWTAGTSSGGHSTTSPSVRGTETTGQSAAESVTTGPVTGYTETSGPSAGVTVTPRQSPTVTQTTGSSAAVSGTTVQSLTVSGTTRPSSGQTEITGSSVKESGTTESSAVRSGTTGPTAGVTGTNGPSSAGVTGITGSSPGVTGTTGSSPGVTGTTGSSARSGTSIPSVGKTGTTRTSVEESRTTRPSAGITGTNGLSAEVTGTTGPLAGVTGTTGPSAGVTRTTGLSAGETGTTGLSPGVTRTTRSSAGLTGKTGLSAGVTGKTGLSAEVTGTTRLSAGVTGTTGPSPGVTGTTGTPAGVTGTTELSAGVTGKTGLSSEVTETTGLSYGVKRTIGLSAGSTGTSGQSAGVAGTTTLSAEVTGTTRPSAGVTGTTGLSAEVTEITGISAVVTGTTGPSAGVTETTGSSAGVAGTTRLSAGVTGITGLSAGVTGTTGLSTEVTGTTGPSAGATGTTGLSVGVTGITGLSDVVTETTGSSARSGTGIPSVGETRTTSTSVEESRTTRPSAGIMGTNGLPAEVTGTTEPLAGGTGTTGILAGVTGTTGLSAGETGKIGSSAGVTGKTGSSARVTGKTGPSAEVTGKTGLSAGVTGTTGLSPGVTGTSGLSAEVTGTTGPSAEATGLPGVSAGVTGTTGSLAGGTGTIGLSAGVTGTTGSSAGVTGTTGLSAGVTGIAGLSAGVTGITGPSAGVTGTTTVSAGVTGTTGLSAEATEITGLSAGVTGTTGLSAGVTETIRLSAGVTGTIRSSAGVTGITGLSAGVTGTTGPSAGVTGSTGLLAGVTETTGQSAKVTGTTGQSVGVTGTTRSSGGVTGITGLSAGVTGTNGLSAVTGMTGLSAEVTGTTGLSVGVTGIAGLSAGVTGITGPSAGITGTTTISAGVTGTSGLSAEATGITGLSAGVTGKTGLSAGVTETIGLSAEATGTIGSSPGVTGTTGSSTGVTGITGLSAGVTGTTGLSTEVTGTTGPSAGVTRTTGLSAGVTGITGLSAIVTETTGSSARSGTSIPSVGETGTTRTSVEESRTTRPSAGITGTNGLSAEVTGTIGPLAGGTGTTGLSAGVTGTVGSSAVVTGTTGLSAGVTGTTGPSAEETGATGPSAEVTETTGPSAGVTGTGRLSAEVTGTTGPSAEVTGLPGESAEVTGTIGSPAGVTGTTQLSAVVTGITGLSAEVTGTTGLSAGVTGITGLSAEVTRTTGLSAGVTGTIGLSAGVTGTTRPSAGVTGTTGQSAEVTGTTEPSAGLTETTGSSTGVTGATGPLAGVTGTTGISTEVTGTTGPSARVTGTTVLSAGVTGITGLSAIVTETTGSSARSGTSTPSVGETGTTRTSVEESRATRPSAGITGTNGQSAEVTWITGPLAGVTGTTGISAGVTGTTGLSAGVTGTIGSSAVVTGINGLSAGVTGTTGPSAEETGATGPSAEVTGTTGPSAEETGATGPSAEVTGTTGPSGGVTGTNGLSAEVTGTTGPSAEVTGLPGVSAGVTGTIGSPAAVTGTIRPSAVVTGITGLSAEVTGTTGLSAWVTGIAGLSAGVTETIGSSAGVTGTNGLSAEATGTTGPSAGVTGTTGLSAGVTGTAGLSARVTESTGLSAGVTGTTGLSAGVTGTTGPSAGITGTNGLSAEVTGTTGPLAGVTGTIGLSAGVTGIAGLSAGVTESTGLSAGVTGTIRSSAVVTGINGLSAGVTGTTGPSAEETGATGPSAEVTGTTGPSGGVTGTSGISAEVTGTTGPSAEVTGLPGVSAGVTGTIGSPAAVTGTTRPSAVVTGISGLSAEVTGTTGLSAGVTETIGSSAGVTGTNGLSAEATETTGPSAGVTGTTGLSAGVTGTTGPSAGIAGTNGLSAGVTGTTGLSARVTESTGLSAGVTGTIGSSAVVTETTRLSSGVTGTIGPSAEETGATGLSAEVTGTTGSLAEVTGTTGLSAGVTGTIGSSAVVTGTTGLSAGITGTNGLSAEVTGTAGPLAGVTGTTGLSAGVTGTTGLSAGVTETTGQSAGVTESTGLSPGVTGTIGSSAVVTGIKGLSAGVTGTTGPSAEETGATGPSAEVTGTTGPSGGVTGTSVLSVEVTGTTGPSAEVTGLPGVSAGLTGTIGSPAAVRGTTWPSAVVTGISGLSGEVTGTTGLSAGVTGIGGLSAGVTGTIGSSAGVTGTNALSAEATGTTGPSAGVTGTTGLSAGVTGTTGLSAGVTGTIRSSAVVTETTGLSAGVTGTTGPSAGIAGTNGLSAEVTGTTGLSAGMTGTTGLSARVTESTGLSAGVTGTIGSSAVVTETTRLSAGVTGTIGPSAEETGATGLSAEVTRTTGSLAGVTGTTGPSAVVTGKTELSAEVTGTTELSAEVTEKTGPSAEVTGKTGLSAGVMETTGPSAEVTGTTGSSAGVTGTTGPSAGVTGTTGPSAEATGLPGVSAGVTGTIGSPAGVTGTARLSAVVTGISGLSAEVTGTTGLSTGVTGIAGHSAAVTGITRPSAGVTGTTTVSAGVTGTIGLSAEATGITLPSAGVTETTGLSAGVTETIGLSAGVTGTIGSSAGVTEITGLSAGVTGTTGPSAGVTGSTVLSAGVTATTGQSVGVTGTTGPSAGVTGTTGLSAGVTGIAGLSAGVTGITGPSAGVTGTTTVSAGVTGTTGLSAEATEITGLSAGVTGTTGLSAGVTGIAGLSAGVTETIGSSAGVTGTNGLSAEATGKTGPSAGVTGTTGLSAGVTGTTGLSAGVTETIGLSAGVTGTIGSSAGVKGTTGQSAEVTGATGQSVGVTGTTRSSGGVTGITGLSAGLRGTTVSSAKAGTSIPLTGKTGTTRTSVEESTTTGPSAGITGTNGLSAEMTGTNELSAGVTGTIGSSAGVTGTTGLSVEATVTTGLSAGVTGTTVPLAGVTWTPGPSAGVTGIAALSAGVTGKSGLSAGVTGKTGLSAGVTGTTGPSAEATGKTGLSAGVTGITGPFAEVTGTTGLSAGVIGTTGSSAEVTGITGLSAGVTGKTRSSAGVTGTTGLSAKSGTSIPSAGKTGTTKTSVEESRTTRPSAGITATTGVPAATSPGAEGESIASTSVATGAIPRSTIAPGSTTTGTTGVTTGTTLAPRSFNIGTSGGISGKTLKPGSYVSEATTATGTPGAGPSGGTTISSPEVSTISEVSNTGITGVGSETSIETGISNTATTGVAPGTTLAPGSSSTEATTSIGGSASTRGGIATEATGSTRGVRTTGSEAPEGTSGEFSGTTISSGGFHTEATTLTGGRGSIGTESRAESTTSLPQSAKTRGGILTEATSSTGRIRATGSEAPGGTSRKFSGTTISSGGSHTEATTLAGGRDSTESEFRTATIGVVPATTVAPGSSKTEATTFLGVSGTTSVGRATGATTSIAGSDTSQAEHPGGTSGEFPGTTITSGDSHTEATALTGSRGSIGTESTVETTTYIGESGTTRGGLATATTGAFSGKTLEPGNDNTEATGSTGGIRATRTEAPGGTSGEFPGTTFTSGGSHTEATTFTGGKGSTGTESRAATTRAAPGTTLVPGSSNTGATASPGGSATTRGRITTATTGAFSGKTLESENDNTEATSSTRGVRTTRSEAPGGTSGEFPGTRITSGGSYTATTRAAPGTTLAPGSSNTGATASLGGSAMTRGRITTATTGAFSGKTLEPGNNNTEATSSTRGVRTTRSEAPGEATTLTGDRSSTGSESRTATTGVAPGTTVAPGSSKTEATTFLGVSGTTNIGRATGATTSIVGSDTSQAERPGGTTVVSPGASSTSQSSRPGTSVTPDSSASESETVTTKEFSGTTAISRTSHTGTPAASGGQATGSLTATTGVAPGTTVAPGSSNTEATTSVGERETTKAEIITGDTGELSGTTIISENSTTAGITAATGKQAGTSEVAPSTTVAPGSFSTAATTSPGASGTTGVTTTTKTTTSLGGSGTTGAEIKSATTGAPGSRTGTAGVPSATTVSPGSSNSEATTSVGESGKTGAETITEATTSTEGTGTSGTGFKTGTSEVAPATTVAPGSFSTAATTSPGASGMTGVTTTTKTTTSLGGSGTTGAKIKLVGTTTTAPESRTAGVPSGTRVTPGSSNSEATTSVEESRITRAEVITEATTFSGGSGATRAGLPRGTTGEFSGTNFISGSSNTEATTSTEGTGTSGTGFKIAGITSAPGKQAGTSGVSLATTVAPGSFSTATTSSGASGITRAGPTSETTTSLGGSGTTGAEIKSAAVPSGTTVAPGSSNSEATTSVGENGKTRGEIITDTTEGTSGKVLEPGSAHTEATTFPGGSGTTRAGPPGGTTGELSRMTIIPGSSNTEATTSTKGTGTSGTGFKTGTSWVAPGTTVSPGSFSTATISPGASRTTGAAPAAETTTSLEGGGTTGAEIKSGATSGVPGSKTGTAGVPSATTIAPGSSNSEATTSLGESGKTRVETITGTTEGKTLAAGSAHTEATTFSGGSGSTRAGPLGGASGTSGGYVPGRETEPTTSIEETGTSRTIFKTVGITSAPGRQAGTSVVAPSTTVAPGSFSTAATTSPGASGMTGVRTTSKTTTSLGGTGTTRTEIKSGATTGAPGIKTDIMGESSRTTILSGSSNTEATNSIEETGTSGTGFKTAGITAAPGKQAGTSGVAPGTTVAPGSFSTAATTSPGASGVTGTGPTAETTTFLGGSSTTGAEIKSGATTGAPGSKTGTAKVLSGTTVASGSSNSEATTFSGITEAVTVPSKNGSMTTALGSQLSSSQTVIPGSSGTISHTTVAPGSSVTGTTTGASDDQVTGSKTGTTGVALSTTVAPGSSSTEATTSTGVHRTTVVGQKTGATTRGSAKQGTRSTIEATTSFRGTGTTGSGMNTGTTGVVSGNTISPSSFNTEATSGTSERPNPGSEIGTTGIVSGTTVAPGSSNTEATTSLGNGGTTEAGSKIVTTGITTGTTIVPGSFNTKATTSTDVGVATGVGMATGITNIISGRSQPTGSKTGYTVTGSGTTALPGGFRTGNTPGSTGVTSSQEGTTVVSSGITGIPETSISGPSKEASDKTTAPGPPTTVTASTGVKETSETGVQTGSTLVTAGVPTRPQVSQPETTVVATREVETENKTECLASLPPAPVCHGPLGEEKSPGDIWTANCHRGTCTDAKTIDCKPEECPSPPTCKTGEKLVKFQSNDTCCEIGYCEPRTCLFNNTDYEIGASFDDPSNPCVSYSCKDTGFAAVVQDCPKQTWCAEANRIYDSKKCCYTCKNNCRSSLVNVTVIYSGCKKRVQMAKCTGECEKTAKYNYDILLLEHSCLCCREENYELRDIVLDCPDGSTIPYQYKHITTCSCLDICQLYTTFMYS.

The first 21 residues, 1–21, serve as a signal peptide directing secretion; it reads MKLILWYLVVALWCFFKDVEA. 4 disordered regions span residues 33–197, 222–247, 279–305, and 332–467; these read AASR…YGAG, SKADGRETRGSGSAGGETIVFGPDAG, GDTGISSKTVEGNQTSSSGGSVSIDLG, and QEGF…PEAT. Composition is skewed to low complexity over residues 35 to 48 and 88 to 98; these read SRSGGFSYGSSSSG and GGFFNSSSSSG. Positions 169–184 are enriched in basic and acidic residues; sequence DKSRERWDAGNSRSED. A compositionally biased stretch (polar residues) spans 187 to 197; the sequence is ADSTNTRYGAG. Polar residues predominate over residues 279–299; sequence GDTGISSKTVEGNQTSSSGGS. Positions 359-369 are enriched in low complexity; sequence GSDSSSSGDSS. A compositionally biased stretch (polar residues) spans 370–381; the sequence is ARNGFENSSGIS. Composition is skewed to low complexity over residues 424–435 and 443–452; these read SDSGGNTWSSDS and TSSSEYSTSG. VWFD domains follow at residues 478–649, 815–995, and 1274–1447; these read GEIS…QHCN, GRCK…SSCI, and TICH…QECS. Disulfide bonds link C502/C648, C817/C952, C838/C994, C857/C865, C1276/C1411, C1298/C1446, C1307/C1408, and C1323/C1330. 27 disordered regions span residues 1680–1699, 1732–2464, 2484–2526, 2540–2827, 2850–2917, 2984–3027, 3075–3368, 3386–3428, 3585–3628, 3667–3736, 4105–4147, 4187–4251, 4315–4390, 4414–4455, 4510–4583, 4790–4843, 4895–4930, 5130–5161, 5429–5452, 5464–5494, 5880–5918, 6069–6403, 6440–6918, 6953–7223, 7250–7749, 7783–7975, and 8020–8133; these read TSSSETTGTTLGPLTEPFTT, AGTT…KSPG, LESE…TEGS, RPLD…MTGT, STVG…LGTI, VTTG…SGTT, GTTG…GKTG, TTRL…GKTG, ETTG…TNGL, GSSA…TGLP, TGSS…NGLS, SAGV…AEVT, GLSA…SARV, TGSS…TNGQ, TGTT…TGLP, SSAGVTGTNGLSAEATETTGPSAGVTGTTGLSAGVT, TGTTGPSAEETGATGPSAEVTGTTGPSGGVTG, VTGTTELSAEVTEKTGPSAEVTGK, GPSAEVTGTTGSSAGVTGTTGPSAGVTGTTG, GTSIPLTGKTGTTRTSVEESTTTGPSAGITGTNGLSAEM, TGKT…STES, GRAT…ETTK, GTSE…TGFK, SFST…SKTG, KNGS…EAGS, and SGRS…VSQP. 3 stretches are compositionally biased toward low complexity: residues 1732 to 1746, 1772 to 1813, and 1820 to 1833; these read AGTTGGVDAATTGAA, PGEA…TTGP, and GATSSEATSSEGMS. Over residues 1835 to 1860 the composition is skewed to polar residues; sequence VTGQSLGSTAGSDSEITAKTSFTGSS. Residues 1868 to 1879 show a composition bias toward low complexity; the sequence is PSPGSPGHFSGG. A compositionally biased stretch (polar residues) spans 1880–1905; the sequence is TTEWGNVATTGAAGENTSGALGSTEG. Low complexity predominate over residues 1909–1921; it reads ATTSAGSGNTAGT. A compositionally biased stretch (polar residues) spans 1950–1968; that stretch reads GSSTPGEADIGNTSFGKSG. Low complexity-rich tracts occupy residues 1969-1983 and 2013-2049; these read TPTVSAASTTSSPVS and GGKITSGWSSSGTSTGASNTPGATGSSTGQTDTSGPS. The span at 2055–2100 shows a compositional bias: polar residues; it reads NYGQSSEIPGTIKSSSDVSGTMGQSDTTSGPSVAVTRTSEQSSGVT. 2 stretches are compositionally biased toward low complexity: residues 2132 to 2147 and 2159 to 2170; these read TTGSSAEGSGTTGPSS and GSGTSGQSVTGS. 2 stretches are compositionally biased toward polar residues: residues 2171 to 2186 and 2209 to 2225; these read RATGLSATELGTTVSF and GSGTTGPSVVRSGTTRL. 2 stretches are compositionally biased toward low complexity: residues 2233–2246 and 2280–2313; these read TESSPGVTGTTTPS and SGPSVVGSGTTGPTSAGLGTTAPSTRRSSTTKPS. The interval 2238 to 6086 is approximate repeats of G-V-T-G-T-T-G-P-S-A; that stretch reads GVTGTTTPSA…GVTGTTGLSA (3849 aa). Polar residues-rich tracts occupy residues 2316–2332 and 2354–2372; these read RTGTTGQSGAESGTTEP and ATESSTSRPLGETTGTTIP. A compositionally biased stretch (gly residues) spans 2403 to 2419; it reads SSGGSGATRSSGGGMGT. Residues 2420 to 2441 are compositionally biased toward low complexity; it reads TGQSTARSETTGPLFGLTGTFG. Polar residues predominate over residues 2442-2460; the sequence is QSATVTGTSSNSAGVTTPE. 3 stretches are compositionally biased toward low complexity: residues 2512-2526, 2545-2571, and 2578-2589; these read SAGETGTTEPSTEGS, GSGTTGTLSGGSSTTRSSDGTTGTTRK, and TTGLSGLTGTSG. Polar residues-rich tracts occupy residues 2595–2610 and 2638–2653; these read TGTSSKSAGVTVTSEK and TRPSGGVTVTSGQSAR. Positions 2654–2681 are enriched in low complexity; the sequence is VTETVGASAGVTGTTGPSTEGSGATGPS. Polar residues-rich tracts occupy residues 2695–2748 and 2755–2770; these read SGTT…TGTT and TETTRPSVVKSGTTGP. Residues 2787–2799 are compositionally biased toward low complexity; sequence ATRSSGGETETTG. Composition is skewed to polar residues over residues 2800–2827, 2850–2859, and 2874–2892; these read QSAVKSGTTESFTRLTRTSGQSAGMTGT, STVGLETTRP, and AQTTGPSAGVTVTSGQSAR. The segment covering 2894-2910 has biased composition (low complexity); it reads TGASGPSVGVTGTTGPA. Polar residues predominate over residues 2984–2998; it reads VTTGPSVTGVETTAK. The segment covering 2999–3027 has biased composition (low complexity); sequence TTSGGLSTTISSVGGTGTTGQSPERSGTT. Residues 3099–3109 show a composition bias toward polar residues; it reads PSITGSGTTRP. The segment covering 3114–3130 has biased composition (low complexity); sequence SWTAGTSSGGHSTTSPS. A compositionally biased stretch (polar residues) spans 3131 to 3159; the sequence is VRGTETTGQSAAESVTTGPVTGYTETSGP. Low complexity predominate over residues 3172 to 3188; it reads TVTQTTGSSAAVSGTTV. Residues 3189–3224 show a composition bias toward polar residues; sequence QSLTVSGTTRPSSGQTEITGSSVKESGTTESSAVRS. A compositionally biased stretch (low complexity) spans 3225-3277; that stretch reads GTTGPTAGVTGTNGPSSAGVTGITGSSPGVTGTTGSSPGVTGTTGSSARSGTS. Composition is skewed to polar residues over residues 3303–3317 and 3324–3362; these read ITGTNGLSAEVTGTT and TGTTGPSAGVTRTTGLSAGETGTTGLSPGVTRTTRSSAG. Residues 3390–3417 are compositionally biased toward low complexity; that stretch reads SAGVTGTTGPSPGVTGTTGTPAGVTGTT. Polar residues-rich tracts occupy residues 3702-3728 and 4105-4116; these read VTGTTGLSPGVTGTSGLSAEVTGTTGP and TGSSARSGTSIP. The segment covering 4117-4126 has biased composition (low complexity); it reads SVGETGTTRT. The span at 4320–4346 shows a compositional bias: polar residues; the sequence is VTGTTRPSAGVTGTTGQSAEVTGTTEP. Composition is skewed to low complexity over residues 4347 to 4385 and 4414 to 4426; these read SAGLTETTGSSTGVTGATGPLAGVTGTTGISTEVTGTTG and TGSSARSGTSTPS. Low complexity-rich tracts occupy residues 5469–5494 and 5889–5903; these read VTGTTGSSAGVTGTTGPSAGVTGTTG and TGTTRTSVEESTTTG. 3 stretches are compositionally biased toward polar residues: residues 5908–5918, 6071–6103, and 6111–6121; these read ITGTNGLSAEM, KTRSSAGVTGTTGLSAKSGTSIPSAGKTGTTKT, and TRPSAGITATT. The span at 6156-6168 shows a compositional bias: low complexity; it reads TTTGTTGVTTGTT. Composition is skewed to polar residues over residues 6217–6248 and 6257–6275; these read EVSTISEVSNTGITGVGSETSIETGISNTATT and APGSSSTEATTSIGGSAST. Residues 6284–6295 show a composition bias toward low complexity; the sequence is TGSTRGVRTTGS. Composition is skewed to polar residues over residues 6303–6323 and 6336–6346; these read GEFSGTTISSGGFHTEATTLT and ESTTSLPQSAK. The span at 6378-6389 shows a compositional bias: low complexity; that stretch reads SGTTISSGGSHT. Polar residues-rich tracts occupy residues 6440–6457 and 6470–6503; these read GRATGATTSIAGSDTSQA and TTITSGDSHTEATALTGSRGSIGTESTVETTTYI. Residues 6507–6523 are compositionally biased toward low complexity; the sequence is GTTRGGLATATTGAFSG. The span at 6560–6571 shows a compositional bias: polar residues; sequence TTFTSGGSHTEA. Positions 6581–6597 are enriched in low complexity; it reads TGTESRAATTRAAPGTT. The segment covering 6599–6608 has biased composition (polar residues); that stretch reads VPGSSNTGAT. Low complexity predominate over residues 6612–6628; it reads GGSATTRGRITTATTGA. Polar residues-rich tracts occupy residues 6669-6680 and 6689-6698; these read RITSGGSYTATT and APGSSNTGAT. The span at 6707 to 6718 shows a compositional bias: low complexity; it reads TRGRITTATTGA. Polar residues predominate over residues 6752 to 6766; sequence TTLTGDRSSTGSESR. A compositionally biased stretch (low complexity) spans 6767–6781; it reads TATTGVAPGTTVAPG. Residues 6794–6817 are compositionally biased toward polar residues; the sequence is SGTTNIGRATGATTSIVGSDTSQA. The segment covering 6827 to 6842 has biased composition (low complexity); the sequence is SPGASSTSQSSRPGTS. A compositionally biased stretch (polar residues) spans 6843 to 6875; sequence VTPDSSASESETVTTKEFSGTTAISRTSHTGTP. Over residues 6887 to 6901 the composition is skewed to low complexity; that stretch reads TATTGVAPGTTVAPG. 2 stretches are compositionally biased toward polar residues: residues 6902–6911 and 6953–6964; these read SSNTEATTSV and GTSEVAPSTTVA. A compositionally biased stretch (low complexity) spans 6966–6994; that stretch reads GSFSTAATTSPGASGTTGVTTTTKTTTSL. Polar residues predominate over residues 7006 to 7041; it reads SATTGAPGSRTGTAGVPSATTVSPGSSNSEATTSVG. Over residues 7045-7074 the composition is skewed to low complexity; it reads KTGAETITEATTSTEGTGTSGTGFKTGTSE. Over residues 7085–7094 the composition is skewed to polar residues; the sequence is SFSTAATTSP. Positions 7095-7112 are enriched in low complexity; sequence GASGMTGVTTTTKTTTSL. Polar residues predominate over residues 7143–7158; it reads TRVTPGSSNSEATTSV. Composition is skewed to low complexity over residues 7201–7215 and 7250–7276; these read SGSSNTEATTSTEGT and SFSTATTSSGASGITRAGPTSETTTSL. A compositionally biased stretch (polar residues) spans 7293–7311; the sequence is SGTTVAPGSSNSEATTSVG. Over residues 7379 to 7397 the composition is skewed to low complexity; it reads TTSTKGTGTSGTGFKTGTS. Positions 7403–7421 are enriched in polar residues; that stretch reads TTVSPGSFSTATISPGASR. Residues 7422 to 7435 are compositionally biased toward low complexity; sequence TTGAAPAAETTTSL. A compositionally biased stretch (polar residues) spans 7465–7483; sequence SATTIAPGSSNSEATTSLG. The span at 7525-7537 shows a compositional bias: gly residues; that stretch reads PLGGASGTSGGYV. Composition is skewed to polar residues over residues 7544-7557 and 7571-7596; these read PTTSIEETGTSRTI and AGTSVVAPSTTVAPGSFSTAATTSPG. Residues 7600-7613 are compositionally biased toward low complexity; it reads MTGVRTTSKTTTSL. 2 stretches are compositionally biased toward polar residues: residues 7642-7669 and 7698-7708; these read SSRTTILSGSSNTEATNSIEETGTSGTG and SFSTAATTSPG. The span at 7715 to 7732 shows a compositional bias: low complexity; sequence TGPTAETTTFLGGSSTTG. The segment covering 7783 to 7811 has biased composition (polar residues); the sequence is KNGSMTTALGSQLSSSQTVIPGSSGTISH. Low complexity predominate over residues 7812–7828; the sequence is TTVAPGSSVTGTTTGAS. The segment covering 7830 to 7851 has biased composition (polar residues); sequence DQVTGSKTGTTGVALSTTVAPG. The segment covering 7852–7861 has biased composition (low complexity); it reads SSSTEATTST. Polar residues predominate over residues 7862–7891; that stretch reads GVHRTTVVGQKTGATTRGSAKQGTRSTIEA. Residues 7892-7917 show a composition bias toward low complexity; that stretch reads TTSFRGTGTTGSGMNTGTTGVVSGNT. Over residues 7918-7934 the composition is skewed to polar residues; that stretch reads ISPSSFNTEATSGTSER. The segment covering 7938 to 7952 has biased composition (low complexity); it reads GSEIGTTGIVSGTTV. Composition is skewed to polar residues over residues 7953 to 7965, 8020 to 8040, 8048 to 8081, and 8110 to 8120; these read APGSSNTEATTSL, SGRSQPTGSKTGYTVTGSGTT, TGNTPGSTGVTSSQEGTTVVSSGITGIPETSISG, and ETGVQTGSTLV. In terms of domain architecture, VWFC spans 8159–8225; sequence PVCHGPLGEE…DTCCEIGYCE (67 aa). Disulfide bonds link C8288/C8339, C8306/C8353, C8315/C8369, and C8319/C8371. Residues 8288–8376 enclose the CTCK domain; that stretch reads CKNNCRSSLV…TTCSCLDICQ (89 aa).

In terms of tissue distribution, expressed corneal epithelial cells, conjunctival goblet and epithelial cells and lacrimal gland cells (at protein level). Expressed by mucous cells of the submandibular gland and submucosal gland of the trachea. Expressed by middle ear epithelial cells.

It localises to the secreted. May function in ocular mucus homeostasis. This chain is Mucin-19 (MUC19), found in Homo sapiens (Human).